The primary structure comprises 887 residues: Alanine--tRNA ligase (887 aa).

Zn(2+)-binding residues include His581, His585, Cys683, and His687.

It belongs to the class-II aminoacyl-tRNA synthetase family. The cofactor is Zn(2+).

The protein resides in the cytoplasm. It catalyses the reaction tRNA(Ala) + L-alanine + ATP = L-alanyl-tRNA(Ala) + AMP + diphosphate. In terms of biological role, catalyzes the attachment of alanine to tRNA(Ala) in a two-step reaction: alanine is first activated by ATP to form Ala-AMP and then transferred to the acceptor end of tRNA(Ala). Also edits incorrectly charged Ser-tRNA(Ala) and Gly-tRNA(Ala) via its editing domain. The chain is Alanine--tRNA ligase from Ehrlichia ruminantium (strain Welgevonden).